The following is a 487-amino-acid chain: Glycogen synthase (487 aa).

K20 is an ADP-alpha-D-glucose binding site.

The protein belongs to the glycosyltransferase 1 family. Bacterial/plant glycogen synthase subfamily.

It catalyses the reaction [(1-&gt;4)-alpha-D-glucosyl](n) + ADP-alpha-D-glucose = [(1-&gt;4)-alpha-D-glucosyl](n+1) + ADP + H(+). It functions in the pathway glycan biosynthesis; glycogen biosynthesis. Its function is as follows. Synthesizes alpha-1,4-glucan chains using ADP-glucose. This chain is Glycogen synthase, found in Aliivibrio fischeri (strain ATCC 700601 / ES114) (Vibrio fischeri).